The primary structure comprises 471 residues: ATP synthase subunit beta (471 aa).

An ATP-binding site is contributed by 153–160 (GGAGVGKT).

This sequence belongs to the ATPase alpha/beta chains family. F-type ATPases have 2 components, CF(1) - the catalytic core - and CF(0) - the membrane proton channel. CF(1) has five subunits: alpha(3), beta(3), gamma(1), delta(1), epsilon(1). CF(0) has four main subunits: a(1), b(1), b'(1) and c(9-12).

It localises to the cell inner membrane. It carries out the reaction ATP + H2O + 4 H(+)(in) = ADP + phosphate + 5 H(+)(out). Functionally, produces ATP from ADP in the presence of a proton gradient across the membrane. The catalytic sites are hosted primarily by the beta subunits. The polypeptide is ATP synthase subunit beta (Methylibium petroleiphilum (strain ATCC BAA-1232 / LMG 22953 / PM1)).